The chain runs to 551 residues: MDAVEPSVEKEYKKIISFRDTVFEGKHQQFLVPNNVRLKFLRDRLHKSLKNFDSVKRKVEIANDEGNNKLLKSSPKAQTRDENTPSEFKNGGFSNRESMSENCFSKSSTNLPRLDINRDFNSLLNSQTKPEATGLMKEDITPVVNTSKQSSTGTQEESSKPEKSNKLLAKSTLSLYGNQAFNPSSVLPSNSSSTPKENKKNVNKETYQPNTFRRSPLKNDTGSVELSNLYMPSPPSSALPVSLVSAPSPPRATNVAVPCLKHLESSEQGNNLLINKAFTSPRLPSPPQSTRPSSTRFPSVPLSDEKNSIVSVKNEEPSVILGNQSPISDLHPYSPSWIPYPKELQSLQVNRIPELSLENNVMSTRDYKDIMPHPRPSAVLLDKPVSLDQTSHPFPHQNTYILPPGIRNSVDYDGTFLSRKSLPPYNGIHRLHESPSQFSNQSRYNWEPILENRSLLHLNRPPPIETHYSYESNNSSFSPYYHKRHRQISPYYPTSSVYGVYESPPHMSDSRISRQHMPLTHTTYEPSAPYYNDYELAEEIERRRHHSFYDY.

Disordered stretches follow at residues 66–111 (GNNK…STNL), 130–165 (PEATGLMKEDITPVVNTSKQSSTGTQEESSKPEKSN), 180–229 (AFNP…LSNL), and 277–303 (AFTSPRLPSPPQSTRPSSTRFPSVPLS). Residue Ser74 is modified to Phosphoserine. Composition is skewed to polar residues over residues 92–111 (GFSNRESMSENCFSKSSTNL) and 143–156 (VVNTSKQSSTGTQE). Residues 182–193 (NPSSVLPSNSSS) are compositionally biased toward low complexity. The segment covering 204–226 (KETYQPNTFRRSPLKNDTGSVEL) has biased composition (polar residues). A compositionally biased stretch (low complexity) spans 290-299 (TRPSSTRFPS).

This is an uncharacterized protein from Schizosaccharomyces pombe (strain 972 / ATCC 24843) (Fission yeast).